Consider the following 287-residue polypeptide: Flagellin (287 aa).

It belongs to the bacterial flagellin family.

It localises to the secreted. The protein resides in the bacterial flagellum. Flagellin is the subunit protein which polymerizes to form the filaments of bacterial flagella. This is Flagellin (flaA) from Listeria monocytogenes serovar 1/2a (strain ATCC BAA-679 / EGD-e).